A 70-amino-acid polypeptide reads, in one-letter code: Adenylate kinase (70 aa).

An ATP-binding site is contributed by 10-15 (GAGKGT). The NMP stretch occupies residues 30 to 59 (STGDLFRANISKQTELGKLAKSYMDKGELV). AMP is bound by residues Thr-31, Arg-36, and 57–59 (ELV).

This sequence belongs to the adenylate kinase family. As to quaternary structure, monomer.

Its subcellular location is the cytoplasm. It carries out the reaction AMP + ATP = 2 ADP. It functions in the pathway purine metabolism; AMP biosynthesis via salvage pathway; AMP from ADP: step 1/1. Functionally, catalyzes the reversible transfer of the terminal phosphate group between ATP and AMP. Plays an important role in cellular energy homeostasis and in adenine nucleotide metabolism. The polypeptide is Adenylate kinase (adk) (Streptomyces scabiei).